The sequence spans 840 residues: Protein translocase subunit SecA (840 aa).

ATP contacts are provided by residues Gln-89, 107-111 (GEGKT), and Asp-514.

Belongs to the SecA family. Monomer and homodimer. Part of the essential Sec protein translocation apparatus which comprises SecA, SecYEG and auxiliary proteins SecDF-YajC and YidC.

The protein resides in the cell inner membrane. It is found in the cytoplasm. It catalyses the reaction ATP + H2O + cellular proteinSide 1 = ADP + phosphate + cellular proteinSide 2.. Functionally, part of the Sec protein translocase complex. Interacts with the SecYEG preprotein conducting channel. Has a central role in coupling the hydrolysis of ATP to the transfer of proteins into and across the cell membrane, serving as an ATP-driven molecular motor driving the stepwise translocation of polypeptide chains across the membrane. This chain is Protein translocase subunit SecA, found in Blochmanniella floridana.